Reading from the N-terminus, the 86-residue chain is MELKHSISDYTEAEFLQLVTTICNADTSSEEELVKLVTHFEEMTEHPSGSDLIYYPKEGDDDSPSGIVNTVKQWRAANGKSGFKQG.

The protein belongs to the colicins ColE2/ColE8/ColE9 and pyocins S1/S2 family.

This protein is able to protect a cell, which harbors the plasmid ColE9 encoding colicin E9, against colicin E9, it binds specifically to the DNase-type colicin and inhibits its bactericidal activity. The protein is Colicin-E9 immunity protein (imm) of Escherichia coli.